Reading from the N-terminus, the 135-residue chain is DNA-directed RNA polymerase subunit omega (135 aa).

The protein belongs to the RNA polymerase subunit omega family. The RNAP catalytic core consists of 2 alpha, 1 beta, 1 beta' and 1 omega subunit. When a sigma factor is associated with the core the holoenzyme is formed, which can initiate transcription.

It catalyses the reaction RNA(n) + a ribonucleoside 5'-triphosphate = RNA(n+1) + diphosphate. Promotes RNA polymerase assembly. Latches the N- and C-terminal regions of the beta' subunit thereby facilitating its interaction with the beta and alpha subunits. The sequence is that of DNA-directed RNA polymerase subunit omega from Rhizobium meliloti (strain 1021) (Ensifer meliloti).